Consider the following 395-residue polypeptide: MRN complex-interacting protein (395 aa).

The span at 90-100 shows a compositional bias: basic and acidic residues; sequence DPKSEQEEAHV. 2 disordered regions span residues 90 to 155 and 180 to 275; these read DPKS…GGNC and KRSS…FGES. Residues 104–113 show a composition bias toward polar residues; sequence SKYTDQTTEG. Positions 117 to 127 are enriched in acidic residues; the sequence is EKDDEDEDENV. Positions 142–145 match the Nuclear localization signal (NLS) motif; the sequence is RKKM. Low complexity predominate over residues 183–195; it reads SSSWNKGSVSKYS. 2 stretches are compositionally biased toward polar residues: residues 224 to 244 and 260 to 270; these read ACSS…QIKS and QSESPSVSSHQ.

It belongs to the MRNIP family.

The protein localises to the nucleus. Its subcellular location is the nucleoplasm. Functionally, plays a role in the cellular response to DNA damage and the maintenance of genome stability through its association with the MRN damage-sensing complex. Promotes chromatin loading and activity of the MRN complex to facilitate subsequent ATM-mediated DNA damage response signaling and DNA repair. The polypeptide is MRN complex-interacting protein (Danio rerio (Zebrafish)).